We begin with the raw amino-acid sequence, 182 residues long: Bifunctional protein PyrR (182 aa).

The short motif at 99–111 is the PRPP-binding element; sequence VILVDDVLYTGRT.

The protein belongs to the purine/pyrimidine phosphoribosyltransferase family. PyrR subfamily. As to quaternary structure, homodimer and homohexamer; in equilibrium.

It carries out the reaction UMP + diphosphate = 5-phospho-alpha-D-ribose 1-diphosphate + uracil. Functionally, regulates transcriptional attenuation of the pyrimidine nucleotide (pyr) operon by binding in a uridine-dependent manner to specific sites on pyr mRNA. This disrupts an antiterminator hairpin in the RNA and favors formation of a downstream transcription terminator, leading to a reduced expression of downstream genes. In terms of biological role, also displays a weak uracil phosphoribosyltransferase activity which is not physiologically significant. The polypeptide is Bifunctional protein PyrR (Alkaliphilus metalliredigens (strain QYMF)).